Here is a 178-residue protein sequence, read N- to C-terminus: Transcriptional repressor NrdR (178 aa).

Residues 1-21 (MRCPFCGHEDTQVKDSRPHED) are disordered. Residues 3–34 (CPFCGHEDTQVKDSRPHEDGAAIRRRRICAAC) fold into a zinc finger. Positions 7–21 (GHEDTQVKDSRPHED) are enriched in basic and acidic residues. An ATP-cone domain is found at 49 to 139 (LYVVKADDRR…VHWDFRETKD (91 aa)).

Belongs to the NrdR family. Requires Zn(2+) as cofactor.

In terms of biological role, negatively regulates transcription of bacterial ribonucleotide reductase nrd genes and operons by binding to NrdR-boxes. The chain is Transcriptional repressor NrdR from Gluconacetobacter diazotrophicus (strain ATCC 49037 / DSM 5601 / CCUG 37298 / CIP 103539 / LMG 7603 / PAl5).